A 493-amino-acid chain; its full sequence is Glutamyl-tRNA(Gln) amidotransferase subunit A (493 aa).

Active-site charge relay system residues include Lys78 and Ser158. Ser182 acts as the Acyl-ester intermediate in catalysis.

The protein belongs to the amidase family. GatA subfamily. As to quaternary structure, heterotrimer of A, B and C subunits.

The enzyme catalyses L-glutamyl-tRNA(Gln) + L-glutamine + ATP + H2O = L-glutaminyl-tRNA(Gln) + L-glutamate + ADP + phosphate + H(+). In terms of biological role, allows the formation of correctly charged Gln-tRNA(Gln) through the transamidation of misacylated Glu-tRNA(Gln) in organisms which lack glutaminyl-tRNA synthetase. The reaction takes place in the presence of glutamine and ATP through an activated gamma-phospho-Glu-tRNA(Gln). In Rickettsia typhi (strain ATCC VR-144 / Wilmington), this protein is Glutamyl-tRNA(Gln) amidotransferase subunit A.